Here is a 301-residue protein sequence, read N- to C-terminus: Small ribosomal subunit protein uS2 (301 aa).

A disordered region spans residues 282–301 (VRKQPVSENENVEAAAAEQK). Low complexity predominate over residues 289–301 (ENENVEAAAAEQK).

This sequence belongs to the universal ribosomal protein uS2 family.

This is Small ribosomal subunit protein uS2 from Koribacter versatilis (strain Ellin345).